The chain runs to 418 residues: Glutamyl-tRNA(Gln) amidotransferase subunit D (418 aa).

The Asparaginase/glutaminase domain maps to 74–405 (KNISILSTGG…EEAKELMPKN (332 aa)). Catalysis depends on residues Thr84, Thr160, Asp161, and Lys237.

It belongs to the asparaginase 1 family. GatD subfamily. Heterodimer of GatD and GatE.

The catalysed reaction is L-glutamyl-tRNA(Gln) + L-glutamine + ATP + H2O = L-glutaminyl-tRNA(Gln) + L-glutamate + ADP + phosphate + H(+). In terms of biological role, allows the formation of correctly charged Gln-tRNA(Gln) through the transamidation of misacylated Glu-tRNA(Gln) in organisms which lack glutaminyl-tRNA synthetase. The reaction takes place in the presence of glutamine and ATP through an activated gamma-phospho-Glu-tRNA(Gln). The GatDE system is specific for glutamate and does not act on aspartate. The protein is Glutamyl-tRNA(Gln) amidotransferase subunit D of Methanococcus maripaludis (strain C6 / ATCC BAA-1332).